A 153-amino-acid chain; its full sequence is Ribosome maturation factor RimP (153 aa).

This sequence belongs to the RimP family.

Its subcellular location is the cytoplasm. Functionally, required for maturation of 30S ribosomal subunits. This Christiangramia forsetii (strain DSM 17595 / CGMCC 1.15422 / KT0803) (Gramella forsetii) protein is Ribosome maturation factor RimP.